Consider the following 146-residue polypeptide: Large ribosomal subunit protein uL15 (146 aa).

The segment at 1–58 (MRLHELHPAPGSRPRATRVGRGIGSGLGKTSGRGHKGQKARSGGGVRRGFEGGQMPLT) is disordered. The span at 21-31 (RGIGSGLGKTS) shows a compositional bias: gly residues.

The protein belongs to the universal ribosomal protein uL15 family. As to quaternary structure, part of the 50S ribosomal subunit.

In terms of biological role, binds to the 23S rRNA. This chain is Large ribosomal subunit protein uL15, found in Moorella thermoacetica (strain ATCC 39073 / JCM 9320).